The chain runs to 280 residues: MANAPRILALGLLALLCAAAGPAAAQNCGCQPNFCCSKFGYCGTTDAYCGDGCQSGPCRSGGGGGGGGGGGGGGSGGANVANVVTDAFFNGIKNQAGSGCEGKNFYTRSAFLSAVNAYPGFAHGGTEVEGKREIAAFFAHVTHETGHFCYISEINKSNAYCDASNRQWPCAAGQKYYGRGPLQISWNYNYGPAGRDIGFNGLADPNRVAQDAVIAFKTALWFWMNNVHRVMPQGFGATIRAINGALECNGNNPAQMNARVGYYKQYCQQLRVDPGPNLTC.

An N-terminal signal peptide occupies residues 1–25 (MANAPRILALGLLALLCAAAGPAAA). The 35-residue stretch at 26 to 60 (QNCGCQPNFCCSKFGYCGTTDAYCGDGCQSGPCRS) folds into the Chitin-binding type-1 domain. 4 disulfides stabilise this stretch: cysteine 28/cysteine 36, cysteine 30/cysteine 42, cysteine 35/cysteine 49, and cysteine 53/cysteine 58. A hinge region (poly-Gly) region spans residues 61–77 (GGGGGGGGGGGGGGSGG). The interval 78-280 (ANVANVVTDA…RVDPGPNLTC (203 aa)) is catalytic. A disulfide bond links cysteine 100 and cysteine 149. Glutamate 144 (proton donor) is an active-site residue. Asparagine 155 carries an N-linked (GlcNAc...) asparagine glycan. 2 cysteine pairs are disulfide-bonded: cysteine 161–cysteine 170 and cysteine 248–cysteine 280. Asparagine 277 carries an N-linked (GlcNAc...) asparagine glycan.

The protein belongs to the glycosyl hydrolase 19 family. Chitinase class IV subfamily.

It is found in the secreted. It carries out the reaction Random endo-hydrolysis of N-acetyl-beta-D-glucosaminide (1-&gt;4)-beta-linkages in chitin and chitodextrins.. Inactivated by l-ethyl-3-(3-dimethylaminopropyl)carbodiimide (EDC) in the absence of exogenous nucleophiles (e.g. GlcNAc4, GlcNAc3 and GlcNAc2). Not inhibited by tetra-N-acetylchitopentaose or modified chitotetraose substrate TMG-chitotriomycin-pMP, containing a free, non-acetylated glucosaminyl residue or a N-trimethylamino glucosamine (TMG) residue at the non-reducing terminus, respectively. In terms of biological role, defense against chitin-containing fungal pathogens. Hydrolyzes glycol chitin and tetra-N-acetylchitotetraose in vitro. Its action is countered by fungal polyglycine hydrolases and fungalysin, that cleave the chitin-binding domain from the protein. In Zea mays (Maize), this protein is Endochitinase A.